Reading from the N-terminus, the 207-residue chain is Myosin light chain 6B (207 aa).

Residues Met1–Pro50 form a disordered region. Positions Glu36–Pro50 are enriched in low complexity. 3 consecutive EF-hand domains span residues Asp63 to Asn98, Gly140 to Lys175, and Lys175 to Leu207.

Myosin is a hexamer of 2 heavy chains and 4 light chains.

In terms of biological role, regulatory light chain of myosin. Does not bind calcium. The chain is Myosin light chain 6B from Mus musculus (Mouse).